The following is a 142-amino-acid chain: Glycine-rich RNA-binding protein 1 (142 aa).

One can recognise an RRM domain in the interval 1 to 65; sequence NSLHSAFSTY…RNITVNEAQS (65 aa). Positions 48-101 are disordered; sequence MNGKELDGRNITVNEAQSRGGRGGGGGGGYGGGRGGGGGYGRRDGGGGGYGGGG. A compositionally biased stretch (gly residues) spans 67–101; that stretch reads GGRGGGGGGGYGGGRGGGGGYGRRDGGGGGYGGGG.

Possibly has a role in RNA transcription or processing during stress. In Sorghum bicolor (Sorghum), this protein is Glycine-rich RNA-binding protein 1 (GRP1).